An 865-amino-acid chain; its full sequence is Protein translocase subunit SecA (865 aa).

ATP contacts are provided by residues Q85, 103-107 (GEGKT), and D505. Positions 847, 849, 858, and 859 each coordinate Zn(2+).

It belongs to the SecA family. Monomer and homodimer. Part of the essential Sec protein translocation apparatus which comprises SecA, SecYEG and auxiliary proteins SecDF. Other proteins may also be involved. It depends on Zn(2+) as a cofactor.

It localises to the cell membrane. It is found in the cytoplasm. The catalysed reaction is ATP + H2O + cellular proteinSide 1 = ADP + phosphate + cellular proteinSide 2.. Part of the Sec protein translocase complex. Interacts with the SecYEG preprotein conducting channel. Has a central role in coupling the hydrolysis of ATP to the transfer of proteins into and across the cell membrane, serving as an ATP-driven molecular motor driving the stepwise translocation of polypeptide chains across the membrane. In Lactococcus lactis subsp. cremoris (strain SK11), this protein is Protein translocase subunit SecA.